Consider the following 700-residue polypeptide: Calpain-2 catalytic subunit (700 aa).

The residue at position 2 (Ala-2) is an N-acetylalanine. Residues 2 to 19 (AGIAMKLAKDREAAEGLG) constitute a propeptide, anchors to the small subunit. Residues 45–344 (LFQDPSFPAL…YSRLEICNLT (300 aa)) form the Calpain catalytic domain. Positions 89, 91, and 96 each coordinate Ca(2+). Residue Cys-105 is part of the active site. Ca(2+)-binding residues include Glu-175, Gln-229, and Lys-230. Residues His-262 and Asn-286 contribute to the active site. Glu-292, Asp-299, Gln-319, and Glu-323 together coordinate Ca(2+). The domain III stretch occupies residues 345–514 (PDTLTCDSYK…KKADYQTVDD (170 aa)). The interval 515–529 (EIEANIEEIEANEED) is linker. Positions 530-700 (IGDGFRRLFA…LISWLSFSVL (171 aa)) are domain IV. Ca(2+) contacts are provided by Ala-542, Asp-545, Glu-547, Glu-552, Asp-585, Asp-587, Ser-589, Lys-591, Glu-596, Asp-615, Asp-617, Ser-619, Thr-621, Glu-626, Asp-658, and Asn-661. 2 consecutive EF-hand domains span residues 572 to 605 (FSIE…TKIQ) and 602 to 637 (TKIQ…AGFK). One can recognise an EF-hand 3 domain in the interval 667 to 700 (VRLEILFKIFKQLDPENTGTIQLDLISWLSFSVL).

The protein belongs to the peptidase C2 family. In terms of assembly, forms a heterodimer with a small (regulatory) subunit (CAPNS1). Interacts with CPEB3; this leads to cleavage of CPEB3. Ca(2+) is required as a cofactor. Ubiquitous.

It is found in the cytoplasm. The protein localises to the cell membrane. The catalysed reaction is Broad endopeptidase specificity.. With respect to regulation, activated by 200-1000 micromolar concentrations of calcium and inhibited by calpastatin. Functionally, calcium-regulated non-lysosomal thiol-protease which catalyze limited proteolysis of substrates involved in cytoskeletal remodeling and signal transduction. Proteolytically cleaves MYOC at 'Arg-226'. Proteolytically cleaves CPEB3 following neuronal stimulation which abolishes CPEB3 translational repressor activity, leading to translation of CPEB3 target mRNAs. This chain is Calpain-2 catalytic subunit (Capn2), found in Rattus norvegicus (Rat).